Consider the following 340-residue polypeptide: GTP 3',8-cyclase (340 aa).

In terms of domain architecture, Radical SAM core spans 8–227 (KLGRPIRDLR…EMIEQNFDIE (220 aa)). Arginine 17 contributes to the GTP binding site. The [4Fe-4S] cluster site is built by cysteine 24 and cysteine 28. Tyrosine 30 provides a ligand contact to S-adenosyl-L-methionine. Cysteine 31 is a binding site for [4Fe-4S] cluster. Residue arginine 71 coordinates GTP. Position 75 (glycine 75) interacts with S-adenosyl-L-methionine. Position 102 (threonine 102) interacts with GTP. Residue serine 126 coordinates S-adenosyl-L-methionine. GTP is bound at residue lysine 163. Methionine 197 provides a ligand contact to S-adenosyl-L-methionine. Cysteine 261 and cysteine 264 together coordinate [4Fe-4S] cluster. 266 to 268 (RAR) serves as a coordination point for GTP. Cysteine 278 contributes to the [4Fe-4S] cluster binding site.

Belongs to the radical SAM superfamily. MoaA family. In terms of assembly, monomer and homodimer. It depends on [4Fe-4S] cluster as a cofactor.

It catalyses the reaction GTP + AH2 + S-adenosyl-L-methionine = (8S)-3',8-cyclo-7,8-dihydroguanosine 5'-triphosphate + 5'-deoxyadenosine + L-methionine + A + H(+). It functions in the pathway cofactor biosynthesis; molybdopterin biosynthesis. Catalyzes the cyclization of GTP to (8S)-3',8-cyclo-7,8-dihydroguanosine 5'-triphosphate. This Staphylococcus saprophyticus subsp. saprophyticus (strain ATCC 15305 / DSM 20229 / NCIMB 8711 / NCTC 7292 / S-41) protein is GTP 3',8-cyclase.